The primary structure comprises 199 residues: Glycerol-3-phosphate acyltransferase (199 aa).

Transmembrane regions (helical) follow at residues 3–23 (YILI…YLLP), 50–70 (VIGF…VLVF), 77–97 (IHYT…PVFL), 110–130 (GVFF…WISI), and 136–156 (YVSL…FFFN).

The protein belongs to the PlsY family. Probably interacts with PlsX.

It localises to the cell inner membrane. The enzyme catalyses an acyl phosphate + sn-glycerol 3-phosphate = a 1-acyl-sn-glycero-3-phosphate + phosphate. Its pathway is lipid metabolism; phospholipid metabolism. Functionally, catalyzes the transfer of an acyl group from acyl-phosphate (acyl-PO(4)) to glycerol-3-phosphate (G3P) to form lysophosphatidic acid (LPA). This enzyme utilizes acyl-phosphate as fatty acyl donor, but not acyl-CoA or acyl-ACP. The protein is Glycerol-3-phosphate acyltransferase of Pseudothermotoga lettingae (strain ATCC BAA-301 / DSM 14385 / NBRC 107922 / TMO) (Thermotoga lettingae).